Consider the following 474-residue polypeptide: tRNA-2-methylthio-N(6)-dimethylallyladenosine synthase (474 aa).

In terms of domain architecture, MTTase N-terminal spans 3–120 (KKLHIKTWGC…LPEMIEQIQQ (118 aa)). 6 residues coordinate [4Fe-4S] cluster: C12, C49, C83, C157, C161, and C164. The 233-residue stretch at 143–375 (RAEGPSAFVS…QDRITQQAMR (233 aa)) folds into the Radical SAM core domain. The region spanning 378-441 (RQMLGTVQRI…TNSLRGKFIR (64 aa)) is the TRAM domain.

The protein belongs to the methylthiotransferase family. MiaB subfamily. In terms of assembly, monomer. The cofactor is [4Fe-4S] cluster.

Its subcellular location is the cytoplasm. The catalysed reaction is N(6)-dimethylallyladenosine(37) in tRNA + (sulfur carrier)-SH + AH2 + 2 S-adenosyl-L-methionine = 2-methylsulfanyl-N(6)-dimethylallyladenosine(37) in tRNA + (sulfur carrier)-H + 5'-deoxyadenosine + L-methionine + A + S-adenosyl-L-homocysteine + 2 H(+). Its function is as follows. Catalyzes the methylthiolation of N6-(dimethylallyl)adenosine (i(6)A), leading to the formation of 2-methylthio-N6-(dimethylallyl)adenosine (ms(2)i(6)A) at position 37 in tRNAs that read codons beginning with uridine. The polypeptide is tRNA-2-methylthio-N(6)-dimethylallyladenosine synthase (Shewanella loihica (strain ATCC BAA-1088 / PV-4)).